The sequence spans 561 residues: Transcription factor Clamp (561 aa).

The C2H2-type 1 zinc-finger motif lies at 127-149 (FKCDVCSDMFPHLALLNAHKRMH). Zn(2+) is bound by residues C129, C132, H145, and H149. A disordered region spans residues 290–315 (TGGTTPKREASSGSGHHPVKKRNSQQ). C2H2-type zinc fingers lie at residues 360–382 (FSCNICGGLFSRYSSLWSHKKLH), 388–410 (YKCSICGLAFAKAVYLKNHARIH), 416–438 (YKCQTCGMQFSQSPHLKNHERTH), 444–466 (YVCGVCDKGFARHATLWNHRRIH), 472–494 (YKCEICGSAFSQAAHLKNHAKVH), and 500–522 (YKCEICSAAFADRFALKRHRGIH).

Homodimer. Interacts with msl-2; promoting recruitment of the male-specific lethal (MSL) histone acetyltransferase complex to chromatin. Interacts with Nelf-A. Interacts with NELF-B.

The protein resides in the nucleus. It is found in the chromosome. Functionally, transcription factor involved in X-chromosome dosage compensation in males, the process by which transcription of the single X chromosome in the male is elevated. Binds to the DNA sequence (GA)n. Clamp-binding promotes nucleosome depletion and chromatin accessibility, thereby allowing access to other transcription factors. Specifically binds to cis-acting elements on the X-chromosome named chromatin entry sites and promotes recruitment of the male-specific lethal (MSL) histone acetyltransferase complex, which associates with actively transcribed genes on the male X-chromosome to upregulate their expression. Mechanistically, acts by promoting chromatin accessibility at chromatin entry sites, facilitating DNA-binding of msl-2, followed by MSL complex recruitment. In addition to dosage compensation, also involved in zygotic genome activation (ZGA), a critical event in early embryonic development during which the developmental control passes from maternally provided mRNAs to the expression of the zygotic genome after fertilization. Maternally-provided protein cooperates with Zelda (zld) to activate zygotic transcription by increasing chromatin accessibility at promoters of specific genes and facilitate zld occupancy at a subset of key embryonic promoters. Also acts as an activator of gypsy chromatin insulator function by promoting binding of Cp190 to chromatin. In Drosophila melanogaster (Fruit fly), this protein is Transcription factor Clamp.